We begin with the raw amino-acid sequence, 296 residues long: Transcription factor bHLH99 (296 aa).

A bHLH domain is found at 99–150 (NQRMNHIAVERNRRKQMNHFLSILKSMMPLSYSQPNDQASIIEGTISYLKKL).

As to quaternary structure, homodimer. As to expression, expressed constitutively in roots, stems, and flowers.

It localises to the nucleus. This chain is Transcription factor bHLH99 (BHLH99), found in Arabidopsis thaliana (Mouse-ear cress).